A 329-amino-acid polypeptide reads, in one-letter code: Deoxynucleotidyltransferase terminal-interacting protein 1 (329 aa).

Disordered regions lie at residues 1 to 22 (MGATGDAEQPRGPSGAERGGLE) and 147 to 178 (KRGRQAEEECAHRGSPLPKKRKGRPPGHILSS). The tract at residues 56–147 (MTTSFTDPAI…RLTHELPGIK (92 aa)) is important for dimerization. Basic and acidic residues predominate over residues 147–158 (KRGRQAEEECAH). Residues 159 to 173 (RGSPLPKKRKGRPPG) constitute a DNA-binding region (a.T hook). The residue at position 161 (S161) is a Phosphoserine. Positions 164 to 170 (PKKRKGR) match the Nuclear localization signal motif. The important for DNA and nucleosome binding stretch occupies residues 197–316 (REGPKWDPAR…MRKYMETLRT (120 aa)). The H-T-H motif DNA-binding region spans 216–237 (GSRANKALGMGGTRGRIYIKHP).

Monomer and homodimer. A minor proportion may form homotrimers. Interacts with ZNF541. Interacts with the terminal deoxynucleotidyltransferase DNTT. Interacts with TRERF1. Identified in a histone deacetylase complex that contains DNTTIP1, HDAC1 and MIDEAS; this complex assembles into a tetramer that contains four copies of each protein chain. Component of a histone deacetylase complex containing DNTTIP1, ZNF541, HDAC1 and HDAC2. Identified in a complex with KCTD19, HDAC1, HDAC2 and ZNF541.

The protein resides in the nucleus. Functionally, increases DNTT terminal deoxynucleotidyltransferase activity (in vitro). Also acts as a transcriptional regulator, binding to the consensus sequence 5'-GNTGCATG-3' following an AT-tract. Associates with RAB20 promoter and positively regulates its transcription. Binds DNA and nucleosomes; may recruit HDAC1 complexes to nucleosomes or naked DNA. This Pongo abelii (Sumatran orangutan) protein is Deoxynucleotidyltransferase terminal-interacting protein 1 (DNTTIP1).